Consider the following 698-residue polypeptide: MRRFLLLYATQQGQAKAIAEEICEQAVVHGFSADLHCISESDKYDLKTETAPLVVVVSTTGTGDPPDTARKFVKEIQNQTLPVDFFAHLRYGLLGLGDSEYTYFCNGGKIIDKRLQELGARHFYDTGHADDCVGLELVVEPWIAGLWPALRKHFRSSRGQEEISGALPVASPASSRTDLVKSELLHIESQVELLRFDDSGRKDSEVLKQNAVNSNQSNVVIEDFESSLTRSVPPLSQASLNIPGLPPEYLQVHLQESLGQEESQVSVTSADPVFQVPISKAVQLTTNDAIKTTLLVELDISNTDFSYQPGDAFSVICPNSDSEVQSLLQRLQLEDKREHCVLLKIKADTKKKGATLPQHIPAGCSLQFIFTWCLEIRAIPKKAFLRALVDYTSDSAEKRRLQELCSKQGAADYSRFVRDACACLLDLLLAFPSCQPPLSLLLEHLPKLQPRPYSCASSSLFHPGKLHFVFNIVEFLSTATTEVLRKGVCTGWLALLVASVLQPNIHASHEDSGKALAPKISISPRTTNSFHLPDDPSIPIIMVGPGTGIAPFIGFLQHREKLQEQHPDGNFGAMWLFFGCRHKDRDYLFRKELRHFLKHGILTHLKVSFSRDAPVGEEEAPAKYVQDNIQLHGQQVARILLQENGHIYVCGDAKNMAKDVHDALVQIISKEVGVEKLEAMKTLATLKEEKRYLQDIWS.

Residues 5-147 form the Flavodoxin-like domain; sequence LLLYATQQGQ…VVEPWIAGLW (143 aa). 93 to 124 provides a ligand contact to FMN; that stretch reads LLGLGDSEYTYFCNGGKIIDKRLQELGARHFY. The hinge stretch occupies residues 166 to 247; that stretch reads ALPVASPASS…ASLNIPGLPP (82 aa). Phosphoserine is present on residues Ser171 and Ser189. Residues 271–533 form the FAD-binding FR-type domain; the sequence is DPVFQVPISK…PRTTNSFHLP (263 aa). Position 291 (Lys291) interacts with NADP(+). FAD is bound by residues 451–454 and 487–490; these read RPYS and GVCT. NADP(+) contacts are provided by residues 610 to 611, 624 to 626, and Asp659; these read SR and YVQ. Position 697 (Trp697) interacts with FAD.

In terms of assembly, forms a multiprotein complex with MMACHC, MMADHC and MTR. The cofactor is FAD. It depends on FMN as a cofactor. As to expression, found in all tissues tested, particularly abundant in skeletal muscle.

Its subcellular location is the cytoplasm. It catalyses the reaction 2 methylcob(III)alamin-[methionine synthase] + 2 S-adenosyl-L-homocysteine + NADP(+) + H(+) = 2 cob(II)alamin-[methionine synthase] + 2 S-adenosyl-L-methionine + NADPH. The enzyme catalyses 2 cob(II)alamin + A + 2 H2O + 2 H(+) = 2 aquacob(III)alamin + AH2. Key enzyme in methionine and folate homeostasis responsible for the reactivation of methionine synthase (MTR/MS) activity by catalyzing the reductive methylation of MTR-bound cob(II)alamin. Cobalamin (vitamin B12) forms a complex with MTR to serve as an intermediary in methyl transfer reactions that cycles between MTR-bound methylcob(III)alamin and MTR bound-cob(I)alamin forms, and occasional oxidative escape of the cob(I)alamin intermediate during the catalytic cycle leads to the inactive cob(II)alamin species. The processing of cobalamin in the cytosol occurs in a multiprotein complex composed of at least MMACHC, MMADHC, MTRR and MTR which may contribute to shuttle safely and efficiently cobalamin towards MTR in order to produce methionine. Also necessary for the utilization of methyl groups from the folate cycle, thereby affecting transgenerational epigenetic inheritance. Also acts as a molecular chaperone for methionine synthase by stabilizing apoMTR and incorporating methylcob(III)alamin into apoMTR to form the holoenzyme. Also serves as an aquacob(III)alamin reductase by reducing aquacob(III)alamin to cob(II)alamin; this reduction leads to stimulation of the conversion of apoMTR and aquacob(III)alamin to MTR holoenzyme. This is Methionine synthase reductase from Homo sapiens (Human).